The chain runs to 563 residues: Arginine--tRNA ligase (563 aa).

A 'HIGH' region motif is present at residues 121-131 (PNIAKPFSIGH).

The protein belongs to the class-I aminoacyl-tRNA synthetase family. In terms of assembly, monomer.

It is found in the cytoplasm. It carries out the reaction tRNA(Arg) + L-arginine + ATP = L-arginyl-tRNA(Arg) + AMP + diphosphate. The chain is Arginine--tRNA ligase from Streptococcus thermophilus (strain ATCC BAA-250 / LMG 18311).